The chain runs to 352 residues: Zinc finger CCCH domain-containing protein 42 (352 aa).

One can recognise an RRM domain in the interval 36–114 (AYVYVGGIPF…RTIKVDHCGA (79 aa)). 2 consecutive C3H1-type zinc fingers follow at residues 130-157 (REAR…HDEK) and 180-207 (REGR…HDEK). Positions 156–179 (EKRAANTGWGHEEDRSSKWDHDKN) are disordered. 3 stretches are compositionally biased toward basic and acidic residues: residues 210 to 230 (ATTG…DKLN), 243 to 296 (GDFK…RSGR), and 304 to 352 (RHND…DRRR). Residues 210–352 (ATTGWGHEED…DSLRREDRRR (143 aa)) form a disordered region. The stretch at 319 to 348 (RAQDWEKRKAESRRDRNDREEKDRDSLRRE) forms a coiled coil.

This is Zinc finger CCCH domain-containing protein 42 from Arabidopsis thaliana (Mouse-ear cress).